The chain runs to 122 residues: Prefoldin subunit 1 (122 aa).

Ala-2 carries the post-translational modification N-acetylalanine.

This sequence belongs to the prefoldin subunit beta family. Heterohexamer of two PFD-alpha type and four PFD-beta type subunits.

In terms of biological role, binds specifically to cytosolic chaperonin (c-CPN) and transfers target proteins to it. Binds to nascent polypeptide chain and promotes folding in an environment in which there are many competing pathways for nonnative proteins. The chain is Prefoldin subunit 1 (PFDN1) from Pongo abelii (Sumatran orangutan).